Consider the following 530-residue polypeptide: Glucose-6-phosphate isomerase (530 aa).

Catalysis depends on Glu-347, which acts as the Proton donor. Active-site residues include His-378 and Lys-493.

Belongs to the GPI family.

It is found in the cytoplasm. It carries out the reaction alpha-D-glucose 6-phosphate = beta-D-fructose 6-phosphate. Its pathway is carbohydrate biosynthesis; gluconeogenesis. The protein operates within carbohydrate degradation; glycolysis; D-glyceraldehyde 3-phosphate and glycerone phosphate from D-glucose: step 2/4. In terms of biological role, catalyzes the reversible isomerization of glucose-6-phosphate to fructose-6-phosphate. This Chlamydia abortus (strain DSM 27085 / S26/3) (Chlamydophila abortus) protein is Glucose-6-phosphate isomerase.